The chain runs to 413 residues: Tyrosine--tRNA ligase (413 aa).

Positions 57–66 match the 'HIGH' region motif; sequence PTAPDIHLGH. The short motif at 241–245 is the 'KMSKS' region element; sequence KMSKS. K244 serves as a coordination point for ATP. Residues 351–412 enclose the S4 RNA-binding domain; sequence VWLPRLMVQA…GKRKFARLHT (62 aa).

Belongs to the class-I aminoacyl-tRNA synthetase family. TyrS type 2 subfamily. Homodimer.

It localises to the cytoplasm. The enzyme catalyses tRNA(Tyr) + L-tyrosine + ATP = L-tyrosyl-tRNA(Tyr) + AMP + diphosphate + H(+). Catalyzes the attachment of tyrosine to tRNA(Tyr) in a two-step reaction: tyrosine is first activated by ATP to form Tyr-AMP and then transferred to the acceptor end of tRNA(Tyr). The sequence is that of Tyrosine--tRNA ligase from Moorella thermoacetica (strain ATCC 39073 / JCM 9320).